We begin with the raw amino-acid sequence, 809 residues long: Protein TRC8 homolog (809 aa).

11 helical membrane passes run 124–144 (TVKFVLCVFAFLSAACIFMLW), 147–167 (HLVMVYMFLTSLGLTFLSYWS), 200–220 (VMSLAPHLMAQWFMGMLFAYI), 233–253 (MPIIFASPILLAMLPLPAKVV), 256–276 (LPVVAVFTPIILTKITLMQSA), 350–370 (LVDGCETMTAVLGMTGVISMF), 392–412 (LGTVSAVLFYILALQTGLTSL), 425–445 (LCLLMTALLHFLHNIVSPILM), 461–481 (ALSVCAFLVVLSVSLLYHLWS), 488–508 (WLLAVTAFSVEVVVKVLVSLA), and 539–559 (SVEFCFGILLFINGAWILIFE). The segment at 621–659 (CAICYQEMYSAKITRCRHFFHGVCLRKWLYVQDRCPLCH) adopts an RING-type; atypical zinc-finger fold. Disordered stretches follow at residues 696-724 (NNAAAQRRSPERAPVEASEQAPATSSSSA) and 752-788 (VASSSSATHRISASGSSDSSYMTASAQSPPPTATSAA). The span at 711–724 (EASEQAPATSSSSA) shows a compositional bias: low complexity.

As to quaternary structure, interacts with VHL. Interacts with the MPN domain of CSN5. Interacts with EIF3F and EIF3H.

It is found in the endoplasmic reticulum membrane. In terms of biological role, plays a role in growth inhibition that is dependent upon COP9 signalosome subunits CSN5 and CSN6. May modulate signalosome levels or compartmentalization. Probably functions in the same or a related pathway to VHL during early midline development. This is Protein TRC8 homolog from Drosophila melanogaster (Fruit fly).